Consider the following 190-residue polypeptide: Probable RNA-binding protein 18 (190 aa).

In terms of domain architecture, RRM spans 25-106 (HRLWIGNLDP…KKLVVRWAHA (82 aa)). A disordered region spans residues 166–190 (VYSYFKPPDKKRTTPYSRTAWKSRR).

This is Probable RNA-binding protein 18 (Rbm18) from Mus musculus (Mouse).